Here is a 175-residue protein sequence, read N- to C-terminus: Peptide methionine sulfoxide reductase MsrA (175 aa).

Residue cysteine 10 is part of the active site.

This sequence belongs to the MsrA Met sulfoxide reductase family.

The catalysed reaction is L-methionyl-[protein] + [thioredoxin]-disulfide + H2O = L-methionyl-(S)-S-oxide-[protein] + [thioredoxin]-dithiol. It catalyses the reaction [thioredoxin]-disulfide + L-methionine + H2O = L-methionine (S)-S-oxide + [thioredoxin]-dithiol. Its function is as follows. Has an important function as a repair enzyme for proteins that have been inactivated by oxidation. Catalyzes the reversible oxidation-reduction of methionine sulfoxide in proteins to methionine. This chain is Peptide methionine sulfoxide reductase MsrA, found in Clavibacter michiganensis subsp. michiganensis (strain NCPPB 382).